A 117-amino-acid chain; its full sequence is Hemerythrin subunit alpha (117 aa).

Fe cation is bound by residues His24, His53, Glu57, His72, His76, His105, and Asp110.

It belongs to the hemerythrin family. As to quaternary structure, octamer composed of two types of chains: alpha and beta.

In terms of biological role, hemerythrin is a respiratory protein in blood cells of certain marine worms. The oxygen-binding site in each chain contains two iron atoms. The chain is Hemerythrin subunit alpha from Lingula reevii (Inarticulated brachiopod).